A 322-amino-acid chain; its full sequence is Sideroflexin-1 (322 aa).

S2 carries the post-translational modification N-acetylserine. At 2-102 (SGELPPNINI…MSAQVPMNMT (101 aa)) the chain is on the mitochondrial matrix side. A helical transmembrane segment spans residues 103-120 (ITGCMMTFYRTTPAVLFW). Residues 121–146 (QWINQSFNAVVNYTNRSGDAPLTVNE) are Mitochondrial intermembrane-facing. Residues 147–167 (LGTAYVSATTGAVATALGLNA) form a helical membrane-spanning segment. Topologically, residues 168 to 174 (LTKHVSP) are mitochondrial matrix. Residues 175–195 (LIGRFVPFAAVAAANCINIPL) traverse the membrane as a helical segment. Over 196-228 (MRQRELKVGIPVTDENGNRLGESANAAKQAITQ) the chain is Mitochondrial intermembrane. Residues 229-249 (VVVSRILMAAPGMAIPPFIMN) traverse the membrane as a helical segment. Residues 250–266 (TLEKKAFLKRFPWMSAP) lie on the Mitochondrial matrix side of the membrane. Residues 267-287 (VQVGIVGFCLVFATPLCCALF) traverse the membrane as a helical segment. Over 288 to 322 (PQKSSMSVTSLEAELQARIRETYPELRRVYFNKGL) the chain is Mitochondrial intermembrane.

Belongs to the sideroflexin family.

The protein resides in the mitochondrion inner membrane. The catalysed reaction is L-serine(in) = L-serine(out). The enzyme catalyses L-alanine(in) = L-alanine(out). It carries out the reaction L-cysteine(in) = L-cysteine(out). Its function is as follows. Amino acid transporter importing serine, an essential substrate of the mitochondrial branch of the one-carbon pathway, into mitochondria. Mitochondrial serine is then converted to glycine and formate, which exits to the cytosol where it is used to generate the charged folates that serve as one-carbon donors. May also transport other amino acids including alanine and cysteine. In Bos taurus (Bovine), this protein is Sideroflexin-1 (SFXN1).